A 444-amino-acid polypeptide reads, in one-letter code: Serine/threonine-protein kinase 2 (444 aa).

Residues 87-444 (NRDFYHLSTG…WIDGKSTSHQ (358 aa)) form the Protein kinase domain. Residues 93 to 101 (LSTGGYGII) and K118 contribute to the ATP site. D307 serves as the catalytic Proton acceptor.

This sequence belongs to the protein kinase superfamily. Ser/Thr protein kinase family. Poxviruses subfamily. Post-translationally, phosphorylated in vivo. Autophosphorylated in vitro.

It is found in the host endoplasmic reticulum. The protein localises to the host endoplasmic reticulum-Golgi intermediate compartment. It catalyses the reaction L-seryl-[protein] + ATP = O-phospho-L-seryl-[protein] + ADP + H(+). The enzyme catalyses L-threonyl-[protein] + ATP = O-phospho-L-threonyl-[protein] + ADP + H(+). Functionally, essential serine-protein kinase involved in the early stage of virion morphogenesis. The sequence is that of Serine/threonine-protein kinase 2 (OPG054) from Vertebrata (FPV).